A 290-amino-acid polypeptide reads, in one-letter code: Oxaloacetate decarboxylase (290 aa).

Residue Ser-53 coordinates substrate. A Mg(2+)-binding site is contributed by Asp-91. Substrate contacts are provided by Arg-162 and His-238.

Belongs to the isocitrate lyase/PEP mutase superfamily. Oxaloacetate decarboxylase family. As to quaternary structure, homotetramer; dimer of dimers. Requires Mg(2+) as cofactor.

The catalysed reaction is oxaloacetate + H(+) = pyruvate + CO2. In terms of biological role, catalyzes the decarboxylation of oxaloacetate into pyruvate. Seems to play a role in maintaining cellular concentrations of bicarbonate and pyruvate. The polypeptide is Oxaloacetate decarboxylase (Ectopseudomonas mendocina (strain ymp) (Pseudomonas mendocina)).